A 276-amino-acid polypeptide reads, in one-letter code: Probable NADH-ubiquinone oxidoreductase 30.4 kDa subunit, mitochondrial (276 aa).

A disordered region spans residues 248-276 (EPVGEGKDFTPESFKLPTPQPEPEQEEKK).

Belongs to the complex I 30 kDa subunit family. In terms of assembly, complex I is composed of about 30 different subunits. This is a component of the iron-sulfur protein fraction.

The protein localises to the mitochondrion inner membrane. The enzyme catalyses a ubiquinone + NADH + 5 H(+)(in) = a ubiquinol + NAD(+) + 4 H(+)(out). In terms of biological role, core subunit of the mitochondrial membrane respiratory chain NADH dehydrogenase (Complex I) that is believed to belong to the minimal assembly required for catalysis. Complex I functions in the transfer of electrons from NADH to the respiratory chain. The immediate electron acceptor for the enzyme is believed to be ubiquinone. Essential for N-alkane assimilation. In Candida maltosa (Yeast), this protein is Probable NADH-ubiquinone oxidoreductase 30.4 kDa subunit, mitochondrial (ALI1).